A 489-amino-acid chain; its full sequence is MSSQFPSSPYRTVDPYSPPNYKQQPNCPSSNYEKAGKTASESIGNFGKGDYPTPFPSSSIGRVSSPVRSNKVDAIPSSPAFPGQLAETSPKFSSKLSSPSRHTRVINAELDPSKISTITVGRNSSQCDVALCKNKFISRVHASITYLPQTNEVKIHCFSMNGLIVTYRKQFDCYQLKDTMNNNNRAYRLVPRFSNEKCVKEIQDEGGFINFTLEEGDTVYMTYYKGIMLDFRQVLLRISLKEKNSSSEPLRFEKKAEFESESETKHMGSIRKHPLIFTDTSMDRPKKILKDSNKISIGSDSGVAERMLNHFLNSKSSPLSSVSSVDHEEQTLRQDSLSSDKNPMTMKKPKLNKRVLPSKPKKSVKENLDELSRRNIDVMHLQHILTNHLAFANVQQTPLFQLQQVNSQISELSRDELRSILSDAKCVGVIYRHGKDAAGKPLDEEYFYDLENDDDYERRNLVSSLKGGRTGLRSCRRTHKQYFWKKPAK.

Polar residues-rich tracts occupy residues 1-10 and 20-32; these read MSSQFPSSPY and NYKQ…SSNY. The disordered stretch occupies residues 1–101; the sequence is MSSQFPSSPY…FSSKLSSPSR (101 aa). The residue at position 40 (serine 40) is a Phosphoserine. The span at 56 to 68 shows a compositional bias: polar residues; the sequence is PSSSIGRVSSPVR. Positions 89–100 are enriched in low complexity; the sequence is SPKFSSKLSSPS. At serine 100 the chain carries Phosphoserine. The region spanning 118–170 is the FHA domain; the sequence is ITVGRNSSQCDVALCKNKFISRVHASITYLPQTNEVKIHCFSMNGLIVTYRKQ. The disordered stretch occupies residues 316–366; the sequence is SSPLSSVSSVDHEEQTLRQDSLSSDKNPMTMKKPKLNKRVLPSKPKKSVKE. A compositionally biased stretch (polar residues) spans 333 to 342; the sequence is RQDSLSSDKN.

It belongs to the PLM2/TOS4 family. Phosphorylated by CDC28.

It localises to the nucleus. In terms of biological role, binds to the promoters of genes with functions important for the G1/S (start) transition; primarily genes involved in pheromone response, polarized growth and transcription. This is Protein TOS4 (TOS4) from Saccharomyces cerevisiae (strain ATCC 204508 / S288c) (Baker's yeast).